Reading from the N-terminus, the 26-residue chain is Dermaseptin-J3 (26 aa).

Residue Val-26 is modified to Valine amide.

As to expression, expressed by the skin glands.

Its subcellular location is the secreted. Has antimicrobial activity. This is Dermaseptin-J3 from Phasmahyla jandaia (Jandaia leaf frog).